Consider the following 99-residue polypeptide: NADH dehydrogenase [ubiquinone] 1 alpha subcomplex subunit 2 (99 aa).

Residue A2 is modified to N-acetylalanine. C24 and C58 are joined by a disulfide. Residue K64 is modified to N6-acetyllysine; alternate. K64 carries the N6-succinyllysine; alternate modification.

The protein belongs to the complex I NDUFA2 subunit family. Complex I is composed of 45 different subunits.

It is found in the mitochondrion inner membrane. Accessory subunit of the mitochondrial membrane respiratory chain NADH dehydrogenase (Complex I), that is believed not to be involved in catalysis. Complex I functions in the transfer of electrons from NADH to the respiratory chain. The immediate electron acceptor for the enzyme is believed to be ubiquinone. The chain is NADH dehydrogenase [ubiquinone] 1 alpha subcomplex subunit 2 (NDUFA2) from Gorilla gorilla gorilla (Western lowland gorilla).